We begin with the raw amino-acid sequence, 408 residues long: MMDNDNSLNKRPTFKRALRNISMTSIFITMMLIWLLLSVTSVLTLKQYAQKNLALTAATMTYSLEAAVVFADGPAATETLAALGQQGQFSTAEVRDKQQNILASWHYTRKDPGDTFSNFISHWLFPAPIIQPIRHNGETIGEVRLTARDSSISHFIWFSLAVLTGCILLASGIAITLTRHLHNGLVEALKNITDVVHDVRSNRNFSRRVSEERIAEFHRFALDFNSLLDEMEEWQLRLQAKNAQLLRTALHDPLTGLANRAAFRSGINTLMNNSDARKTSALLFLDGDNFKYINDTWGHATGDRVLIEIAKRLAEFGGLRHKAYRLGGDEFAMVLYDVQSESEVQQICSALTQIFNLPFDLHNGHQTTMTLSIGYAMTIEHASAEKLQELADHNMYQAKHQRAEKLVR.

The Cytoplasmic portion of the chain corresponds to 1–24 (MMDNDNSLNKRPTFKRALRNISMT). Residues 25 to 45 (SIFITMMLIWLLLSVTSVLTL) traverse the membrane as a helical segment. Residues 46–52 (KQYAQKN) lie on the Periplasmic side of the membrane. The helical transmembrane segment at 53–73 (LALTAATMTYSLEAAVVFADG) threads the bilayer. Residues 74–112 (PAATETLAALGQQGQFSTAEVRDKQQNILASWHYTRKDP) are Cytoplasmic-facing. Residues 113-133 (GDTFSNFISHWLFPAPIIQPI) form a helical membrane-spanning segment. At 134-154 (RHNGETIGEVRLTARDSSISH) the chain is on the periplasmic side. The helical transmembrane segment at 155-175 (FIWFSLAVLTGCILLASGIAI) threads the bilayer. Residues 176–408 (TLTRHLHNGL…KHQRAEKLVR (233 aa)) lie on the Cytoplasmic side of the membrane. Residues 183–236 (NGLVEALKNITDVVHDVRSNRNFSRRVSEERIAEFHRFALDFNSLLDEMEEWQL) form the HAMP domain. Residues 278 to 408 (KTSALLFLDG…KHQRAEKLVR (131 aa)) form the GGDEF domain. D286 is a binding site for Mg(2+). The substrate site is built by N294, H299, and D303. Mg(2+) is bound at residue D329. D329 acts as the Proton acceptor in catalysis.

In terms of assembly, homodimer. Interacts with the cell division proteins FtsZ and ZipA. Mg(2+) serves as cofactor.

Its subcellular location is the cell inner membrane. It catalyses the reaction 2 GTP = 3',3'-c-di-GMP + 2 diphosphate. The protein operates within purine metabolism; 3',5'-cyclic di-GMP biosynthesis. Its activity is regulated as follows. Inhibited by YfiR, which prevents relocation to the midcell. A reductive stress signal is required to inactivate YfiR and turn on the DGC activity of DgcN. Functionally, bifunctional protein that catalyzes the synthesis of cyclic-di-GMP (c-di-GMP) in response to reductive stress and then dynamically relocates to the division site to arrest cell division in response to envelope stress. In the presence of high intracellular c-di-GMP levels, and in response to envelope stress, interacts with cell division proteins and halts cell division, without disassembling the Z ring, but by blocking its further progress toward cytokinesis. Part of a network that regulates cell motility by altering levels of c-di-GMP. The polypeptide is Diguanylate cyclase DgcN (Escherichia coli (strain K12)).